Here is a 378-residue protein sequence, read N- to C-terminus: Sphingosine 1-phosphate receptor 3 (378 aa).

At 1–44 the chain is on the extracellular side; that stretch reads MATTHAQGHQPVLGNDTLREHYDYVGKLAGRLRDPPEGGTLITT. Asn-15 carries an N-linked (GlcNAc...) asparagine glycan. Residues 45–65 form a helical membrane-spanning segment; the sequence is ILFLVTCSFIVLENLMVLIAI. Topologically, residues 66–74 are cytoplasmic; that stretch reads WKNNKFHNR. The helical transmembrane segment at 75–95 threads the bilayer; sequence MYFFIGNLALCDLLAGIAYKV. The Extracellular portion of the chain corresponds to 96–115; that stretch reads NILMSGRKTFSLSPTVWFLR. A helical transmembrane segment spans residues 116 to 136; that stretch reads EGSMFVALGASTCSLLAIAIE. At 137-154 the chain is on the cytoplasmic side; that stretch reads RHLTMIKMRPYDANKKHR. The helical transmembrane segment at 155–175 threads the bilayer; that stretch reads VFLLIGMCWLIAFSLGALPIL. Residues 176-196 are Extracellular-facing; it reads GWNCLENFPDCSTILPLYSKK. Residues 197-217 traverse the membrane as a helical segment; the sequence is YIAFLISIFTAILVTIVILYA. At 218 to 244 the chain is on the cytoplasmic side; the sequence is RIYCLVKSSSRRVANHNSERSMALLRT. Residues 245 to 265 form a helical membrane-spanning segment; it reads VVIVVSVFIACWSPLFILFLI. The Extracellular portion of the chain corresponds to 266–281; sequence DVACRAKECSILFKSQ. Residues 282–302 traverse the membrane as a helical segment; the sequence is WFIMLAVLNSAMNPVIYTLAS. Topologically, residues 303–378 are cytoplasmic; sequence KEMRRAFFRL…RSFQNGVLCK (76 aa). The disordered stretch occupies residues 323–354; sequence TQASPMQPALDPSRSKSSSSNNSSHSPKVKED. Ser-326 carries the phosphoserine modification. The span at 337 to 348 shows a compositional bias: low complexity; it reads SKSSSSNNSSHS.

This sequence belongs to the G-protein coupled receptor 1 family. Most abundant in heart, lung, kidney and spleen; low but detectable in brain, thymus, muscle and testis; and nearly undetectable in liver, stomach, and intestine. Expressed in embryonic lung from embryonic day 14-18. Also abundantly detected in embryonic nasal cartilage, sphenoid bone, vena cava, Meckel's cartilage/incisor teeth, genital tubercle and bladder.

It is found in the cell membrane. Functionally, receptor for the lysosphingolipid sphingosine 1-phosphate (S1P). S1P is a bioactive lysophospholipid that elicits diverse physiological effect on most types of cells and tissues. This chain is Sphingosine 1-phosphate receptor 3 (S1pr3), found in Mus musculus (Mouse).